We begin with the raw amino-acid sequence, 178 residues long: Large ribosomal subunit protein uL10 (178 aa).

Belongs to the universal ribosomal protein uL10 family. Part of the ribosomal stalk of the 50S ribosomal subunit. The N-terminus interacts with L11 and the large rRNA to form the base of the stalk. The C-terminus forms an elongated spine to which L12 dimers bind in a sequential fashion forming a multimeric L10(L12)X complex.

Functionally, forms part of the ribosomal stalk, playing a central role in the interaction of the ribosome with GTP-bound translation factors. This chain is Large ribosomal subunit protein uL10, found in Mycobacterium tuberculosis (strain ATCC 25177 / H37Ra).